Consider the following 339-residue polypeptide: Ketol-acid reductoisomerase (NADP(+)) (339 aa).

Residues 1–182 enclose the KARI N-terminal Rossmann domain; that stretch reads MRVYYDRDAD…GGGRSGIIET (182 aa). NADP(+) contacts are provided by residues 24-27, Lys-48, Ser-51, Thr-53, and 83-86; these read YGSQ and DELQ. Residue His-108 is part of the active site. NADP(+) is bound at residue Gly-134. The KARI C-terminal knotted domain maps to 183-328; the sequence is NFREECETDL…AKLRGMMPWI (146 aa). Mg(2+)-binding residues include Asp-191, Glu-195, Glu-227, and Glu-231. Position 252 (Ser-252) interacts with substrate.

Belongs to the ketol-acid reductoisomerase family. The cofactor is Mg(2+).

It catalyses the reaction (2R)-2,3-dihydroxy-3-methylbutanoate + NADP(+) = (2S)-2-acetolactate + NADPH + H(+). It carries out the reaction (2R,3R)-2,3-dihydroxy-3-methylpentanoate + NADP(+) = (S)-2-ethyl-2-hydroxy-3-oxobutanoate + NADPH + H(+). Its pathway is amino-acid biosynthesis; L-isoleucine biosynthesis; L-isoleucine from 2-oxobutanoate: step 2/4. It functions in the pathway amino-acid biosynthesis; L-valine biosynthesis; L-valine from pyruvate: step 2/4. Functionally, involved in the biosynthesis of branched-chain amino acids (BCAA). Catalyzes an alkyl-migration followed by a ketol-acid reduction of (S)-2-acetolactate (S2AL) to yield (R)-2,3-dihydroxy-isovalerate. In the isomerase reaction, S2AL is rearranged via a Mg-dependent methyl migration to produce 3-hydroxy-3-methyl-2-ketobutyrate (HMKB). In the reductase reaction, this 2-ketoacid undergoes a metal-dependent reduction by NADPH to yield (R)-2,3-dihydroxy-isovalerate. The polypeptide is Ketol-acid reductoisomerase (NADP(+)) (Rhizobium rhizogenes (strain K84 / ATCC BAA-868) (Agrobacterium radiobacter)).